Here is a 469-residue protein sequence, read N- to C-terminus: 2-oxoisovalerate dehydrogenase subunit beta, mitochondrial (469 aa).

The N-terminal 40 residues, 1–40 (MKRSTVVIRPSARALSRQASSQSFLLARSSALTSRQRRLY), are a transit peptide targeting the mitochondrion. Tyr167 is a binding site for thiamine diphosphate. The K(+) site is built by Gly194, Leu196, and Thr197.

Heterotetramer of 2 alpha and 2 beta chains. Thiamine diphosphate is required as a cofactor.

It is found in the mitochondrion matrix. The catalysed reaction is N(6)-[(R)-lipoyl]-L-lysyl-[protein] + 3-methyl-2-oxobutanoate + H(+) = N(6)-[(R)-S(8)-2-methylpropanoyldihydrolipoyl]-L-lysyl-[protein] + CO2. The branched-chain alpha-keto dehydrogenase complex catalyzes the overall conversion of alpha-keto acids to acyl-CoA and CO(2). It contains multiple copies of three enzymatic components: branched-chain alpha-keto acid decarboxylase (E1), lipoamide acyltransferase (E2) and lipoamide dehydrogenase (E3). The chain is 2-oxoisovalerate dehydrogenase subunit beta, mitochondrial from Chaetomium thermophilum (strain DSM 1495 / CBS 144.50 / IMI 039719) (Thermochaetoides thermophila).